The primary structure comprises 319 residues: Acetyl-coenzyme A carboxylase carboxyl transferase subunit alpha (319 aa).

The CoA carboxyltransferase C-terminal domain occupies 43–296 (LKQKSVELTQ…KTQLLLDLVE (254 aa)).

The protein belongs to the AccA family. In terms of assembly, acetyl-CoA carboxylase is a heterohexamer composed of biotin carboxyl carrier protein (AccB), biotin carboxylase (AccC) and two subunits each of ACCase subunit alpha (AccA) and ACCase subunit beta (AccD).

It localises to the cytoplasm. It catalyses the reaction N(6)-carboxybiotinyl-L-lysyl-[protein] + acetyl-CoA = N(6)-biotinyl-L-lysyl-[protein] + malonyl-CoA. It functions in the pathway lipid metabolism; malonyl-CoA biosynthesis; malonyl-CoA from acetyl-CoA: step 1/1. Component of the acetyl coenzyme A carboxylase (ACC) complex. First, biotin carboxylase catalyzes the carboxylation of biotin on its carrier protein (BCCP) and then the CO(2) group is transferred by the carboxyltransferase to acetyl-CoA to form malonyl-CoA. The chain is Acetyl-coenzyme A carboxylase carboxyl transferase subunit alpha from Blochmanniella floridana.